The primary structure comprises 139 residues: Pre-hexon-linking protein VIII (139 aa).

A propeptide spanning residues 35-69 (GAAGDYFKSPTSARTLIPLTASCLRPDGVFQLGGG) is cleaved from the precursor.

Belongs to the adenoviridae hexon-linking protein family. Interacts with the peripentonal hexons as well as the hexons in the facets. Part of a complex composed of the core-capsid bridging protein, the endosome lysis protein VI and the hexon-linking protein VIII; these interactions bridge the virus core to the capsid. In terms of processing, cleaved by the viral protease during virion maturation. May cause the middle segment to be shed from the capsid.

The protein resides in the host nucleus. It is found in the virion. In terms of biological role, structural component of the virion that acts as a cement protein on the capsid interior and which glue the peripentonal hexons and group-of-nine hexons together. The sequence is that of Pre-hexon-linking protein VIII from Bovine adenovirus B serotype 3 (BAdV-3).